The primary structure comprises 446 residues: N-succinylarginine dihydrolase (446 aa).

Residues 19–28, asparagine 110, and 137–138 contribute to the substrate site; these read AGLSFGNVAS and HR. Residue glutamate 174 is part of the active site. Arginine 213 is a substrate binding site. The active site involves histidine 249. Positions 251 and 364 each coordinate substrate. Cysteine 370 acts as the Nucleophile in catalysis.

Belongs to the succinylarginine dihydrolase family. As to quaternary structure, homodimer.

The enzyme catalyses N(2)-succinyl-L-arginine + 2 H2O + 2 H(+) = N(2)-succinyl-L-ornithine + 2 NH4(+) + CO2. It functions in the pathway amino-acid degradation; L-arginine degradation via AST pathway; L-glutamate and succinate from L-arginine: step 2/5. Functionally, catalyzes the hydrolysis of N(2)-succinylarginine into N(2)-succinylornithine, ammonia and CO(2). The chain is N-succinylarginine dihydrolase from Burkholderia lata (strain ATCC 17760 / DSM 23089 / LMG 22485 / NCIMB 9086 / R18194 / 383).